Reading from the N-terminus, the 230-residue chain is Dephospho-CoA kinase (230 aa).

A disordered region spans residues 1–20 (MSKYAAIPSPYSHQPQAPDH). The DPCK domain occupies 26–225 (VVGLTGGIGS…QDYLKLAQQL (200 aa)). An ATP-binding site is contributed by 34–39 (GSGKSA).

Belongs to the CoaE family.

The protein localises to the cytoplasm. It carries out the reaction 3'-dephospho-CoA + ATP = ADP + CoA + H(+). Its pathway is cofactor biosynthesis; coenzyme A biosynthesis; CoA from (R)-pantothenate: step 5/5. Its function is as follows. Catalyzes the phosphorylation of the 3'-hydroxyl group of dephosphocoenzyme A to form coenzyme A. The polypeptide is Dephospho-CoA kinase (Psychrobacter arcticus (strain DSM 17307 / VKM B-2377 / 273-4)).